The sequence spans 313 residues: Porphobilinogen deaminase (313 aa).

C242 bears the S-(dipyrrolylmethanemethyl)cysteine mark.

It belongs to the HMBS family. As to quaternary structure, monomer. It depends on dipyrromethane as a cofactor.

The enzyme catalyses 4 porphobilinogen + H2O = hydroxymethylbilane + 4 NH4(+). It participates in porphyrin-containing compound metabolism; protoporphyrin-IX biosynthesis; coproporphyrinogen-III from 5-aminolevulinate: step 2/4. Its function is as follows. Tetrapolymerization of the monopyrrole PBG into the hydroxymethylbilane pre-uroporphyrinogen in several discrete steps. This Pectobacterium carotovorum subsp. carotovorum (strain PC1) protein is Porphobilinogen deaminase.